The sequence spans 513 residues: GMP synthase [glutamine-hydrolyzing] (513 aa).

The 198-residue stretch at 3-200 folds into the Glutamine amidotransferase type-1 domain; that stretch reads SVLVLDFGSQ…LINIAGIRPD (198 aa). Cys-80 functions as the Nucleophile in the catalytic mechanism. Residues His-174 and Glu-176 contribute to the active site. Positions 201–388 constitute a GMPS ATP-PPase domain; the sequence is WSSKSFIEHQ…LGIPEDILMR (188 aa). 228–234 serves as a coordination point for ATP; the sequence is SGGVDST.

In terms of assembly, homodimer.

It catalyses the reaction XMP + L-glutamine + ATP + H2O = GMP + L-glutamate + AMP + diphosphate + 2 H(+). It functions in the pathway purine metabolism; GMP biosynthesis; GMP from XMP (L-Gln route): step 1/1. In terms of biological role, catalyzes the synthesis of GMP from XMP. The sequence is that of GMP synthase [glutamine-hydrolyzing] from Chlorobium luteolum (strain DSM 273 / BCRC 81028 / 2530) (Pelodictyon luteolum).